Reading from the N-terminus, the 251-residue chain is Large ribosomal subunit protein uL4 (251 aa).

It belongs to the universal ribosomal protein uL4 family. Part of the 50S ribosomal subunit.

One of the primary rRNA binding proteins, this protein initially binds near the 5'-end of the 23S rRNA. It is important during the early stages of 50S assembly. It makes multiple contacts with different domains of the 23S rRNA in the assembled 50S subunit and ribosome. In terms of biological role, forms part of the polypeptide exit tunnel. This chain is Large ribosomal subunit protein uL4, found in Methanothrix thermoacetophila (strain DSM 6194 / JCM 14653 / NBRC 101360 / PT) (Methanosaeta thermophila).